The primary structure comprises 156 residues: Transcriptional repressor NrdR (156 aa).

A zinc finger spans residues 3-34 (CPYCRHPDSRVVDSREAEEGAAIRRRRSCPNC). The ATP-cone domain occupies 46 to 136 (LSVVKRSGVT…VYRSFTSAED (91 aa)).

It belongs to the NrdR family. Zn(2+) serves as cofactor.

In terms of biological role, negatively regulates transcription of bacterial ribonucleotide reductase nrd genes and operons by binding to NrdR-boxes. This Nocardia farcinica (strain IFM 10152) protein is Transcriptional repressor NrdR.